Consider the following 103-residue polypeptide: Large ribosomal subunit protein uL24 (103 aa).

It belongs to the universal ribosomal protein uL24 family. In terms of assembly, part of the 50S ribosomal subunit.

Functionally, one of two assembly initiator proteins, it binds directly to the 5'-end of the 23S rRNA, where it nucleates assembly of the 50S subunit. One of the proteins that surrounds the polypeptide exit tunnel on the outside of the subunit. The polypeptide is Large ribosomal subunit protein uL24 (Rhizobium meliloti (strain 1021) (Ensifer meliloti)).